The chain runs to 765 residues: Eukaryotic translation initiation factor 3 subunit B (765 aa).

A sufficient for interaction with HCR1 and TIF32 region spans residues 1–136; sequence MKNFLPRTLK…LFVECGSMND (136 aa). Residues 28-261 form a sufficient for interaction with PIC8 region; it reads RNTQLKRSKI…GVTAWGGPNF (234 aa). Serine 61 carries the phosphoserine modification. Tyrosine 67 carries the post-translational modification Phosphotyrosine. One can recognise an RRM domain in the interval 77–162; that stretch reads QYIVVNGAPV…HRLFLYTMKD (86 aa). Serine 671 is modified (phosphoserine).

The protein belongs to the eIF-3 subunit B family. Component of the eukaryotic translation initiation factor 3 (eIF-3) complex.

It localises to the cytoplasm. In terms of biological role, RNA-binding component of the eukaryotic translation initiation factor 3 (eIF-3) complex, which is involved in protein synthesis of a specialized repertoire of mRNAs and, together with other initiation factors, stimulates binding of mRNA and methionyl-tRNAi to the 40S ribosome. The eIF-3 complex specifically targets and initiates translation of a subset of mRNAs involved in cell proliferation. The chain is Eukaryotic translation initiation factor 3 subunit B from Saccharomyces cerevisiae (strain YJM789) (Baker's yeast).